The primary structure comprises 85 residues: Large ribosomal subunit protein bL27 (85 aa).

Residues 1 to 21 are disordered; that stretch reads MAHKKAGGSTRNGRDSNAQRL. Positions 9-19 are enriched in polar residues; that stretch reads STRNGRDSNAQ.

This sequence belongs to the bacterial ribosomal protein bL27 family.

In Pectobacterium carotovorum subsp. carotovorum (strain PC1), this protein is Large ribosomal subunit protein bL27.